A 108-amino-acid polypeptide reads, in one-letter code: Thiosulfate sulfurtransferase GlpE (108 aa).

The Rhodanese domain maps to 18-106 (ENEGATLADI…WERSGLPIET (89 aa)). The active-site Cysteine persulfide intermediate is the C66.

The protein belongs to the GlpE family.

The protein localises to the cytoplasm. It carries out the reaction thiosulfate + hydrogen cyanide = thiocyanate + sulfite + 2 H(+). The catalysed reaction is thiosulfate + [thioredoxin]-dithiol = [thioredoxin]-disulfide + hydrogen sulfide + sulfite + 2 H(+). Transferase that catalyzes the transfer of sulfur from thiosulfate to thiophilic acceptors such as cyanide or dithiols. May function in a CysM-independent thiosulfate assimilation pathway by catalyzing the conversion of thiosulfate to sulfite, which can then be used for L-cysteine biosynthesis. The polypeptide is Thiosulfate sulfurtransferase GlpE (Actinobacillus pleuropneumoniae serotype 5b (strain L20)).